The chain runs to 386 residues: Mannitol-1-phosphate 5-dehydrogenase (386 aa).

An NAD(+)-binding site is contributed by 4 to 15; that stretch reads ALHFGAGNIGRG.

The protein belongs to the mannitol dehydrogenase family.

It carries out the reaction D-mannitol 1-phosphate + NAD(+) = beta-D-fructose 6-phosphate + NADH + H(+). The protein is Mannitol-1-phosphate 5-dehydrogenase of Caldanaerobacter subterraneus subsp. tengcongensis (strain DSM 15242 / JCM 11007 / NBRC 100824 / MB4) (Thermoanaerobacter tengcongensis).